The following is a 202-amino-acid chain: Nascent polypeptide-associated complex subunit alpha (202 aa).

Residues 1–19 show a composition bias toward basic and acidic residues; the sequence is MADPRVEEIVEEETPKQTV. Residues 1–41 form a disordered region; sequence MADPRVEEIVEEETPKQTVEDAGSDSESEAGEANIPAGAAV. The NAC-A/B domain maps to 45–110; it reads SRNEKKARKA…AKIEDLNSQA (66 aa). The span at 117 to 127 shows a compositional bias: low complexity; it reads QLAAAEAAAGE. The interval 117 to 165 is disordered; that stretch reads QLAAAEAAAGEHAGHDHEHDLGTKVPEAETKKEEEEDDGEPVDESGLEA. The segment covering 128–149 has biased composition (basic and acidic residues); the sequence is HAGHDHEHDLGTKVPEAETKKE. Residues 150-162 show a composition bias toward acidic residues; sequence EEEDDGEPVDESG. The UBA domain occupies 163 to 202; it reads LEAKDIELVMAQANVSRKKAVKALRENDNDIVNSIMALSI.

It belongs to the NAC-alpha family. In terms of assembly, part of the nascent polypeptide-associated complex (NAC), consisting of egd2 and egd1. NAC associates with ribosomes via egd1.

It is found in the cytoplasm. The protein localises to the nucleus. Component of the nascent polypeptide-associated complex (NAC), a dynamic component of the ribosomal exit tunnel, protecting the emerging polypeptides from interaction with other cytoplasmic proteins to ensure appropriate nascent protein targeting. The NAC complex also promotes mitochondrial protein import by enhancing productive ribosome interactions with the outer mitochondrial membrane and blocks the inappropriate interaction of ribosomes translating non-secretory nascent polypeptides with translocation sites in the membrane of the endoplasmic reticulum. Egd2 may also be involved in transcription regulation. This is Nascent polypeptide-associated complex subunit alpha (egd2) from Aspergillus oryzae (strain ATCC 42149 / RIB 40) (Yellow koji mold).